Reading from the N-terminus, the 438-residue chain is Coenzyme A disulfide reductase (438 aa).

An FAD-binding site is contributed by 8-33 (GAVAGGATCASQIRRLDKESDIIIFE). Positions 15, 19, 22, 39, and 42 each coordinate substrate. The Nucleophile role is filled by cysteine 43. Cysteine 43 acts as the Redox-active in catalysis. A substrate-binding site is contributed by lysine 71. Position 151–166 (151–166 (VLVIGAGYVSLEVLEN)) interacts with NADP(+). Residue 267–277 (TNVPNIYAIGD) coordinates FAD. Histidine 299 is a substrate binding site. Residue tyrosine 419 participates in FAD binding. Lysine 427 is a binding site for substrate.

This sequence belongs to the class-III pyridine nucleotide-disulfide oxidoreductase family. In terms of assembly, homodimer. Requires FAD as cofactor.

The catalysed reaction is NADP(+) + 2 CoA = CoA-disulfide + NADPH + H(+). Functionally, catalyzes specifically the NADPH-dependent reduction of coenzyme A disulfide. The chain is Coenzyme A disulfide reductase from Staphylococcus aureus (strain Mu3 / ATCC 700698).